The chain runs to 63 residues: MLGHSIRRFTTSVVRRSHYEEGPGKNLPFSVENKWTLLVKMCLFFGSAFSVPFLIVRHQLLKQ.

The N-terminal 16 residues, 1-16, are a transit peptide targeting the mitochondrion; that stretch reads MLGHSIRRFTTSVVRR. Over 17–33 the chain is Mitochondrial matrix; sequence SHYEEGPGKNLPFSVEN. The residue at position 25 (lysine 25) is an N6-acetyllysine; alternate. The residue at position 25 (lysine 25) is an N6-succinyllysine; alternate. A helical transmembrane segment spans residues 34–60; that stretch reads KWTLLVKMCLFFGSAFSVPFLIVRHQL. Topologically, residues 61-63 are mitochondrial intermembrane; it reads LKQ.

Belongs to the cytochrome c oxidase VIIc family. In terms of assembly, component of the cytochrome c oxidase (complex IV, CIV), a multisubunit enzyme composed of 14 subunits. The complex is composed of a catalytic core of 3 subunits MT-CO1, MT-CO2 and MT-CO3, encoded in the mitochondrial DNA, and 11 supernumerary subunits COX4I, COX5A, COX5B, COX6A, COX6B, COX6C, COX7A, COX7B, COX7C, COX8 and NDUFA4, which are encoded in the nuclear genome. The complex exists as a monomer or a dimer and forms supercomplexes (SCs) in the inner mitochondrial membrane with NADH-ubiquinone oxidoreductase (complex I, CI) and ubiquinol-cytochrome c oxidoreductase (cytochrome b-c1 complex, complex III, CIII), resulting in different assemblies (supercomplex SCI(1)III(2)IV(1) and megacomplex MCI(2)III(2)IV(2)). Interacts with RAB5IF.

It localises to the mitochondrion inner membrane. Its pathway is energy metabolism; oxidative phosphorylation. Functionally, component of the cytochrome c oxidase, the last enzyme in the mitochondrial electron transport chain which drives oxidative phosphorylation. The respiratory chain contains 3 multisubunit complexes succinate dehydrogenase (complex II, CII), ubiquinol-cytochrome c oxidoreductase (cytochrome b-c1 complex, complex III, CIII) and cytochrome c oxidase (complex IV, CIV), that cooperate to transfer electrons derived from NADH and succinate to molecular oxygen, creating an electrochemical gradient over the inner membrane that drives transmembrane transport and the ATP synthase. Cytochrome c oxidase is the component of the respiratory chain that catalyzes the reduction of oxygen to water. Electrons originating from reduced cytochrome c in the intermembrane space (IMS) are transferred via the dinuclear copper A center (CU(A)) of subunit 2 and heme A of subunit 1 to the active site in subunit 1, a binuclear center (BNC) formed by heme A3 and copper B (CU(B)). The BNC reduces molecular oxygen to 2 water molecules using 4 electrons from cytochrome c in the IMS and 4 protons from the mitochondrial matrix. In Macaca fascicularis (Crab-eating macaque), this protein is Cytochrome c oxidase subunit 7C, mitochondrial (COX7C).